A 157-amino-acid polypeptide reads, in one-letter code: Ribonuclease H (157 aa).

One can recognise an RNase H type-1 domain in the interval 1-146; sequence MPDLVAYTDG…ADELARAGMA (146 aa). Asp-9, Glu-52, Asp-74, and Asp-138 together coordinate Mg(2+).

This sequence belongs to the RNase H family. In terms of assembly, monomer. It depends on Mg(2+) as a cofactor.

It is found in the cytoplasm. It carries out the reaction Endonucleolytic cleavage to 5'-phosphomonoester.. Functionally, endonuclease that specifically degrades the RNA of RNA-DNA hybrids. This Jannaschia sp. (strain CCS1) protein is Ribonuclease H.